The primary structure comprises 185 residues: UPF0301 protein PSHAa2600 (185 aa).

This sequence belongs to the UPF0301 (AlgH) family.

In Pseudoalteromonas translucida (strain TAC 125), this protein is UPF0301 protein PSHAa2600.